The sequence spans 528 residues: Succinate-semialdehyde dehydrogenase, mitochondrial (528 aa).

Residues 1-34 (MVIGAAARVAIGGCRKLISSHTSLLLVSSQCRQM) constitute a mitochondrion transit peptide. Position 196 to 198 (196 to 198 (TPW)) interacts with NAD(+). Arginine 207 is a binding site for substrate. Residues 222 to 225 (KPSE), 275 to 280 (GSTAVG), and glutamate 297 contribute to the NAD(+) site. Glutamate 297 acts as the Proton acceptor in catalysis. Arginine 325 is a substrate binding site. Cysteine 331 acts as the Nucleophile in catalysis. An intrachain disulfide couples cysteine 331 to cysteine 333. 428–430 (EIF) provides a ligand contact to NAD(+). A substrate-binding site is contributed by serine 488.

This sequence belongs to the aldehyde dehydrogenase family. In terms of assembly, homotetramer. Expressed in developing leaf tissues.

Its subcellular location is the mitochondrion matrix. It carries out the reaction succinate semialdehyde + NAD(+) + H2O = succinate + NADH + 2 H(+). It participates in amino-acid degradation; 4-aminobutanoate degradation. Competitive inhibition by NADH. Inhibited by ATP, ADP and AMP. Redox-regulated. Inhibited under oxydizing conditions. Functionally, oxidizes specifically succinate semialdehyde. Involved in plant response to environmental stress by preventing the accumulation of reactive oxygen species, probably by regulating proline, gamma-hydroxybutyrate (GHB) and gamma-aminobutyrate (GABA) levels. Required for the maintenance of the shoot apical meristem (SAM) structure and subsequent adaxial-abaxial axis-dependent development of cotyledons and leaves. In Arabidopsis thaliana (Mouse-ear cress), this protein is Succinate-semialdehyde dehydrogenase, mitochondrial.